The primary structure comprises 325 residues: Envelope protein H3 (325 aa).

Over 1–285 the chain is Virion surface; that stretch reads MATVNKTPVI…FTTPLISFFG (285 aa). Residues 286-306 traverse the membrane as a helical; Signal-anchor segment; the sequence is LFDINVIGLIVILFIMFMLIF. The Intravirion segment spans residues 307-325; that stretch reads NVKSKLLWFLTGTFVTAFI.

This sequence belongs to the orthopoxvirus OPG108 family. Post-translationally, does not contain disulfide bonds.

It is found in the virion membrane. Envelope protein that binds to heparan sulfate on the cell surface and might provide virion attachment to target cell. The protein is Envelope protein H3 (OPG108) of Variola virus (isolate Human/India/Ind3/1967) (VARV).